The following is a 98-amino-acid chain: Large ribosomal subunit protein uL23 (98 aa).

It belongs to the universal ribosomal protein uL23 family. As to quaternary structure, part of the 50S ribosomal subunit. Contacts protein L29, and trigger factor when it is bound to the ribosome.

One of the early assembly proteins it binds 23S rRNA. One of the proteins that surrounds the polypeptide exit tunnel on the outside of the ribosome. Forms the main docking site for trigger factor binding to the ribosome. In Rickettsia canadensis (strain McKiel), this protein is Large ribosomal subunit protein uL23.